The sequence spans 440 residues: Thymidine phosphorylase (440 aa).

It belongs to the thymidine/pyrimidine-nucleoside phosphorylase family. Homodimer.

The enzyme catalyses thymidine + phosphate = 2-deoxy-alpha-D-ribose 1-phosphate + thymine. The protein operates within pyrimidine metabolism; dTMP biosynthesis via salvage pathway; dTMP from thymine: step 1/2. In terms of biological role, the enzymes which catalyze the reversible phosphorolysis of pyrimidine nucleosides are involved in the degradation of these compounds and in their utilization as carbon and energy sources, or in the rescue of pyrimidine bases for nucleotide synthesis. This is Thymidine phosphorylase from Salmonella paratyphi A (strain ATCC 9150 / SARB42).